We begin with the raw amino-acid sequence, 185 residues long: Elongation factor P (185 aa).

This sequence belongs to the elongation factor P family.

The protein localises to the cytoplasm. It participates in protein biosynthesis; polypeptide chain elongation. Its function is as follows. Involved in peptide bond synthesis. Stimulates efficient translation and peptide-bond synthesis on native or reconstituted 70S ribosomes in vitro. Probably functions indirectly by altering the affinity of the ribosome for aminoacyl-tRNA, thus increasing their reactivity as acceptors for peptidyl transferase. The chain is Elongation factor P from Cyanothece sp. (strain PCC 7425 / ATCC 29141).